The following is a 236-amino-acid chain: Calcium-binding lectin RapA2 (236 aa).

The protein resides in the secreted. In terms of biological role, interacts specifically in a calcium-dependent manner with the acidic exopolysaccharide (EPS) and capsular polysaccharide produced by R.leguminosarum. Could be involved in the development of the biofilm matrix made of EPS. This chain is Calcium-binding lectin RapA2, found in Rhizobium johnstonii (strain DSM 114642 / LMG 32736 / 3841) (Rhizobium leguminosarum bv. viciae).